The sequence spans 240 residues: Probable transcriptional regulatory protein MXAN_7062 (240 aa).

Belongs to the TACO1 family.

It is found in the cytoplasm. The polypeptide is Probable transcriptional regulatory protein MXAN_7062 (Myxococcus xanthus (strain DK1622)).